The following is a 326-amino-acid chain: Vascular endothelial growth factor D (326 aa).

An N-terminal signal peptide occupies residues 1–21; it reads MYGEWAAVNILMMSYVYLVQG. Positions 22-93 are excised as a propeptide; that stretch reads FSIEHRAVKD…SRSTSHRSTR (72 aa). 3 disulfide bridges follow: Cys-116–Cys-158, Cys-147–Cys-194, and Cys-151–Cys-196. N-linked (GlcNAc...) asparagine glycans are attached at residues Asn-160 and Asn-190. Positions 211 to 326 are excised as a propeptide; the sequence is SIQIPEEDQC…CRSMVFSLSP (116 aa). The stretch at 227-242 is one 1; approximate repeat; sequence CPVDMLWDNTKCKCVL. Positions 227–317 are 4 X 16 AA repeats of C-X(10)-C-X-C-X(1,3)-C; the sequence is CPVDMLWDNT…KHKMFHPDTC (91 aa). A run of 2 repeats spans residues 263-278 and 282-298. Asn-292 carries an N-linked (GlcNAc...) asparagine glycan. A 4; truncated repeat occupies 306–317; sequence CQKHKMFHPDTC.

This sequence belongs to the PDGF/VEGF growth factor family. As to quaternary structure, homodimer; non-covalent and antiparallel. In terms of processing, undergoes a complex proteolytic maturation which generates a variety of processed secreted forms with increased activity toward VEGFR-3 and VEGFR-2. VEGF-D first form an antiparallel homodimer linked by disulfide bonds before secretion. The fully processed VEGF-D is composed mostly of two VEGF homology domains (VHDs) bound by non-covalent interactions. As to expression, highly expressed in the spleen, kidney, lung, tongue, ovary and mammary gland.

It localises to the secreted. Functionally, growth factor active in angiogenesis, lymphangiogenesis and endothelial cell growth, stimulating their proliferation and migration and also has effects on the permeability of blood vessels. May function in the formation of the venous and lymphatic vascular systems during embryogenesis, and also in the maintenance of differentiated lymphatic endothelium in adults. Binds and activates VEGFR-3 (Flt4) receptor. In Rattus norvegicus (Rat), this protein is Vascular endothelial growth factor D.